Consider the following 1072-residue polypeptide: PWWP domain-containing protein 1 (1072 aa).

Residues 21 to 133 (DSIQDPKVTP…ADEKELDLGL (113 aa)) are disordered. Residues 25–38 (DPKVTPDDTVVDSS) are compositionally biased toward low complexity. Positions 66 to 77 (RVLESERSEKDG) are enriched in basic and acidic residues. Residues 96-128 (KDDESSEVKEEEEEEDGSDDQSSELGSEADEKE) are compositionally biased toward acidic residues. The PWWP domain maps to 173–234 (VGDLVWGKVK…PAELIPFEPN (62 aa)). The interval 365-387 (KSPRSSVSTLEPHNRAPPRAPLS) is disordered. The span at 366 to 375 (SPRSSVSTLE) shows a compositional bias: polar residues. The short motif at 402–409 (SKKPTKVK) is the Nuclear localization signal 1 element. 4 disordered regions span residues 486-619 (AIPG…GEAG), 681-738 (LSVS…KTNQ), 871-931 (KAEP…NGNR), and 944-973 (ENSS…SSSV). The span at 498–526 (SLDEEKGLAEKSKERMEERAAVLPEHGKS) shows a compositional bias: basic and acidic residues. Residues 545–568 (AGSSLQPLLESHTSASEGKSSTGS) are compositionally biased toward polar residues. 3 consecutive short sequence motifs (nuclear localization signal) follow at residues 596–603 (KKKKKEPD), 705–712 (VKRTEDPS), and 733–740 (LKKTNQLK). Basic and acidic residues predominate over residues 706–729 (KRTEDPSKAGKKRLSSDRQDEIPS). Basic and acidic residues predominate over residues 871–880 (KAEPREPENT). Residues 897-906 (LHQPTLPPPN) show a composition bias toward pro residues. The segment covering 921–930 (SSSSNNGNGN) has biased composition (low complexity). Over residues 947–966 (SKANTEPPQVTMTLNRNSGP) the composition is skewed to polar residues.

It belongs to the PDP family. Interacts with MSI4/FVE. Component of the PRC2 (polycomb repressive complex 2) complex which regulates histone methylation on histone H3K27.

It is found in the nucleus. In terms of biological role, together with PDP2, PDP3 and PDP6, interacts with MSI4/FVE and MSI5 to suppress FLC, MAF4 and MAF5 expression by regulating the function of the PRC2 complex and modulating H3K27me3 level, thereby promoting flowering. The sequence is that of PWWP domain-containing protein 1 from Arabidopsis thaliana (Mouse-ear cress).